Here is a 123-residue protein sequence, read N- to C-terminus: Beta-defensin 126 (123 aa).

Positions 1-20 (MKSLLFTLAVFMLLAQLVSG) are cleaved as a signal peptide. Positions 21–63 (NLYVKRCLNDIGICKKTCKPEEVRSEHGWVMCGKRKACCVPAD) are in vitro binds to LPS, mediates antimicrobial activity and inhibits LPS-mediated inflammation. Disulfide bonds link C27–C58, C34–C52, and C38–C59.

The protein belongs to the beta-defensin family. In terms of assembly, homodimer or homooligomer; disulfide-linked. In terms of processing, O-glycosylated; glycans contain sialic acids alpha(2,3)-linked to galactose and N-acetylgalactosamine. The C-terminal O-glycosylation contributes substantially to the sperm glyocalyx. As to expression, high-level and epididymis-specific expression. Detected in epithelial cells lining the efferent ductules, initial segment, and cauda regions of the epididymis, but not on spermatozoa.

The protein resides in the secreted. Its function is as follows. Highly glycosylated atypical beta-defensin involved in several aspects of sperm function. Facilitates sperm transport in the female reproductive tract and contributes to sperm protection against immunodetection; both functions are probably implicating the negative surface charge provided by its O-linked oligosaccharides in the sperm glycocalyx. Involved in binding of sperm to oviductal epithelial cells to form a sperm reservoir until ovulation. Release from the sperm surface during capacitation and ovaluation by an elevation of oviductal fluid pH is unmasking other surface components and allows sperm to penetrate the cumulus matrix and bind to the zona pellucida of the oocyte. In vitro has antimicrobial activity and may inhibit LPS-mediated inflammation. This chain is Beta-defensin 126 (DEFB126), found in Macaca fascicularis (Crab-eating macaque).